We begin with the raw amino-acid sequence, 309 residues long: Aromatic prenyltransferase (309 aa).

The protein belongs to the aromatic prenyltransferase family.

Prenyltransferase that attaches isoprenoid moieties to carbon atoms of aromatic substrates in an enzyme-catalyzed Friedel-Crafts reaction. Shows specificity for dimethylallyl diphosphate (DMAPP) and does not accept geranyl diphosphate (GPP) or isopentenyl diphosphate (IPP). Prenylates the artificial substrate 2,7-dihydroxynaphthalene (2,7-DHN), as well as dihydrophenazine-1-carboxylic acid and 4-hydroxybenzoic acid at lower levels. Only traces of products are detected with aspulvinone E or flaviolin as substrates; and no product is formed with L-tryptophan, L-tyrosine, or 4-hydroxyphenylpyruvate. Ptf seems no to be involved in the prenylation reaction in the biosynthesis of aspulvinone H and J and the physiological function of ptf remains unknown. This chain is Aromatic prenyltransferase, found in Botryotinia fuckeliana (strain B05.10) (Noble rot fungus).